Reading from the N-terminus, the 62-residue chain is Protein DsrB (62 aa).

It belongs to the DsrB family.

The protein is Protein DsrB of Enterobacter sp. (strain 638).